A 176-amino-acid polypeptide reads, in one-letter code: NAD(P)H-quinone oxidoreductase subunit 6, chloroplastic (176 aa).

The next 5 helical transmembrane spans lie at 10–30, 33–53, 61–81, 92–112, and 152–172; these read FLLV…VLLP, IYSA…YILL, AQLL…VMFM, LWTI…ISLI, and FFLP…GAIA.

The protein belongs to the complex I subunit 6 family. As to quaternary structure, NDH is composed of at least 16 different subunits, 5 of which are encoded in the nucleus.

The protein resides in the plastid. It localises to the chloroplast thylakoid membrane. It carries out the reaction a plastoquinone + NADH + (n+1) H(+)(in) = a plastoquinol + NAD(+) + n H(+)(out). The enzyme catalyses a plastoquinone + NADPH + (n+1) H(+)(in) = a plastoquinol + NADP(+) + n H(+)(out). In terms of biological role, NDH shuttles electrons from NAD(P)H:plastoquinone, via FMN and iron-sulfur (Fe-S) centers, to quinones in the photosynthetic chain and possibly in a chloroplast respiratory chain. The immediate electron acceptor for the enzyme in this species is believed to be plastoquinone. Couples the redox reaction to proton translocation, and thus conserves the redox energy in a proton gradient. In Coffea arabica (Arabian coffee), this protein is NAD(P)H-quinone oxidoreductase subunit 6, chloroplastic (ndhG).